Reading from the N-terminus, the 277-residue chain is Formamidopyrimidine-DNA glycosylase (277 aa).

The active-site Schiff-base intermediate with DNA is Pro2. Glu3 (proton donor) is an active-site residue. Lys60 (proton donor; for beta-elimination activity) is an active-site residue. The DNA site is built by His94, Arg113, and Arg158. The FPG-type zinc-finger motif lies at 243–277 (WVYNRAGEPCKVCGDVIQRIKLGGRSSHFCRQCQV). The active-site Proton donor; for delta-elimination activity is Arg267.

The protein belongs to the FPG family. As to quaternary structure, monomer. Zn(2+) serves as cofactor.

It catalyses the reaction Hydrolysis of DNA containing ring-opened 7-methylguanine residues, releasing 2,6-diamino-4-hydroxy-5-(N-methyl)formamidopyrimidine.. The catalysed reaction is 2'-deoxyribonucleotide-(2'-deoxyribose 5'-phosphate)-2'-deoxyribonucleotide-DNA = a 3'-end 2'-deoxyribonucleotide-(2,3-dehydro-2,3-deoxyribose 5'-phosphate)-DNA + a 5'-end 5'-phospho-2'-deoxyribonucleoside-DNA + H(+). Involved in base excision repair of DNA damaged by oxidation or by mutagenic agents. Acts as a DNA glycosylase that recognizes and removes damaged bases. Has a preference for oxidized purines, such as 7,8-dihydro-8-oxoguanine (8-oxoG). Has AP (apurinic/apyrimidinic) lyase activity and introduces nicks in the DNA strand. Cleaves the DNA backbone by beta-delta elimination to generate a single-strand break at the site of the removed base with both 3'- and 5'-phosphates. The polypeptide is Formamidopyrimidine-DNA glycosylase (Trichormus variabilis (strain ATCC 29413 / PCC 7937) (Anabaena variabilis)).